The chain runs to 296 residues: tRNA dimethylallyltransferase (296 aa).

11-18 (GPTAVGKT) contacts ATP. Position 13–18 (13–18 (TAVGKT)) interacts with substrate. The segment at 36-39 (DSQQ) is interaction with substrate tRNA.

This sequence belongs to the IPP transferase family. Monomer. Requires Mg(2+) as cofactor.

It carries out the reaction adenosine(37) in tRNA + dimethylallyl diphosphate = N(6)-dimethylallyladenosine(37) in tRNA + diphosphate. Catalyzes the transfer of a dimethylallyl group onto the adenine at position 37 in tRNAs that read codons beginning with uridine, leading to the formation of N6-(dimethylallyl)adenosine (i(6)A). The protein is tRNA dimethylallyltransferase of Streptococcus equi subsp. equi (strain 4047).